We begin with the raw amino-acid sequence, 95 residues long: Small ribosomal subunit protein bS6 (95 aa).

It belongs to the bacterial ribosomal protein bS6 family.

Its function is as follows. Binds together with bS18 to 16S ribosomal RNA. The protein is Small ribosomal subunit protein bS6 of Aster yellows witches'-broom phytoplasma (strain AYWB).